The sequence spans 88 residues: Serine protease inhibitor Kazal-type 11 (88 aa).

The first 24 residues, methionine 1 to serine 24, serve as a signal peptide directing secretion. A Kazal-like domain is found at leucine 32–lysine 87. Asparagine 37 is a glycosylation site (N-linked (GlcNAc...) asparagine). Cystine bridges form between cysteine 38–cysteine 69, cysteine 47–cysteine 66, and cysteine 55–cysteine 85.

Expressed in epydiymis, in the caput. Also expressed in seminal vesicles.

Its subcellular location is the secreted. Probable serine protease inhibitor. This Mus musculus (Mouse) protein is Serine protease inhibitor Kazal-type 11 (Spink11).